The sequence spans 355 residues: MGGNSIGNLFRVTTFGESHGKALGGIIDGVPPGMKLSEDDLQIDLNRRCPGKSLYITPRYEHDKVYILSGIFEGVTTGTSIGLLVQNKDQHSEDYQSIRDLYRPGHADYSYEKKYGMRDYRGGGRSSARETVIRVAAGAIAKKYLAYRCGIKIRGFIAQIGHIKCELKDWNQVEQNPFFCPDIDCLEALDILIRNLKKYGNSIGAKVTIIAENVPAGLGEPVFDRLDADLAHALMSINAVKGVEIGDGFAVISQLGNENRDEITSQGFLSNHAGGILGGISSGQPVIAHIALKPASSVKQPCNTVTRYGNEVEIITEGRHDICVGIRAVPIAEAMMAIVLMDHFLRNRAQCSDVK.

Position 48 (arginine 48) interacts with NADP(+). Residues 125-127 (RSS), 238-239 (NA), glycine 278, 293-297 (KPASS), and arginine 319 each bind FMN.

Belongs to the chorismate synthase family. As to quaternary structure, homotetramer. FMNH2 serves as cofactor.

It catalyses the reaction 5-O-(1-carboxyvinyl)-3-phosphoshikimate = chorismate + phosphate. It functions in the pathway metabolic intermediate biosynthesis; chorismate biosynthesis; chorismate from D-erythrose 4-phosphate and phosphoenolpyruvate: step 7/7. In terms of biological role, catalyzes the anti-1,4-elimination of the C-3 phosphate and the C-6 proR hydrogen from 5-enolpyruvylshikimate-3-phosphate (EPSP) to yield chorismate, which is the branch point compound that serves as the starting substrate for the three terminal pathways of aromatic amino acid biosynthesis. This reaction introduces a second double bond into the aromatic ring system. In Baumannia cicadellinicola subsp. Homalodisca coagulata, this protein is Chorismate synthase.